The primary structure comprises 175 residues: Thioredoxin-like protein CITRX, chloroplastic (175 aa).

Residues 1–73 (MQAASLAFHP…REDYLVKKLS (73 aa)) constitute a chloroplast transit peptide. The region spanning 74-175 (AKEIQELIKG…MMRDIINNDL (102 aa)) is the Thioredoxin domain. Catalysis depends on nucleophile residues C98 and C101. Cysteines 98 and 101 form a disulfide.

This sequence belongs to the thioredoxin family. Plant CITRX-type subfamily.

It is found in the plastid. The protein resides in the chloroplast. Probable thiol-disulfide oxidoreductase that may play a role in proper chloroplast development. The protein is Thioredoxin-like protein CITRX, chloroplastic of Solanum tuberosum (Potato).